Reading from the N-terminus, the 166-residue chain is Transcription antitermination protein NusB (166 aa).

A compositionally biased stretch (basic and acidic residues) spans 1-15 (MISDDSDRFNPRDPK). A disordered region spans residues 1–30 (MISDDSDRFNPRDPKPANAGKPSKSAKRRE).

The protein belongs to the NusB family.

In terms of biological role, involved in transcription antitermination. Required for transcription of ribosomal RNA (rRNA) genes. Binds specifically to the boxA antiterminator sequence of the ribosomal RNA (rrn) operons. In Pseudomonas fluorescens (strain ATCC BAA-477 / NRRL B-23932 / Pf-5), this protein is Transcription antitermination protein NusB.